The chain runs to 883 residues: Kinesin-like protein 5 (883 aa).

In terms of domain architecture, Kinesin motor spans 6–390 (SITVTVRVRP…LKYANRAKNI (385 aa)). Position 144 to 151 (144 to 151 (GATGCGKT)) interacts with ATP. Coiled-coil stretches lie at residues 396–435 (RNMI…SSQS) and 563–588 (LQDE…VDEF). The segment at 755 to 785 (VSPMLEDKPEPGLLIKSPLEKKQEVNSESTQ) is disordered.

Belongs to the TRAFAC class myosin-kinesin ATPase superfamily. Kinesin family. Kinesin II subfamily. In terms of assembly, heterodimer with klp6.

Its subcellular location is the cytoplasm. The protein resides in the cytoskeleton. It is found in the chromosome. It localises to the centromere. The protein localises to the kinetochore. Its subcellular location is the spindle. In terms of biological role, has a role in establishing metaphase during mitosis. Required for chromosome segregation where it generates tension during kinetochore capturing. The protein is Kinesin-like protein 5 (klp5) of Schizosaccharomyces pombe (strain 972 / ATCC 24843) (Fission yeast).